Here is a 658-residue protein sequence, read N- to C-terminus: MDQITITFPDGKTREYPRGTTGLDIAKGISPSLAKRTVVMALNGTLTDLADPIDDNASIDFVARDDARALELIRHDCAHVLAEAVQSLWPGTQVTIGPTIENGFYYDFFRNEPFTPEDFAAIEKKMREIIARDKPFTKEVWTRDEAKKVFADNGEAFKVELVDAIPEDQTIKIYKQGEWFDLCRGPHMTSTGKIGTAFKLMKVAGAYWRGDSNNPMLTRIYGTAFAKQDDLDAYLHQIEEAEKRDHRKLGRELDLFHFQEEGPGVVFWHAKGWSLFQSLVGYMRRRLAGDYDEVNAPQILDKVLWETSGHWEWYRENMFAAQSAGDDAEDKRWFALKPMNCPGHVQIFKHGLKSYRDLPLRLAEFGVVHRYEPSGAMHGLMRVRGFTQDDAHVFCTEAQLAEECIKINDLILSTYSDFGFEGELTVKLSTRPEKRVGTDEMWDHAERVMATVLSEIKAKGGNRIKTEINPGEGAFYGPKFEYVLRDAIGRDWQCGTTQVDFNLPERFGAFYIDADGAKKAPVMVHRAICGSMERFTGILIEHYAGNFPLWLAPVQVVVTTITSEGDDYAKKVLAALRKAGLRADIDLRNEKINFKVREHSLAKVPALLVVGKKEAESHSVSVRRLGSDGQKVMPTDEAIAALVDEATPPDVKRMRGAA.

In terms of domain architecture, TGS spans 1–63 (MDQITITFPD…DDNASIDFVA (63 aa)). Residues 245–548 (DHRKLGRELD…LIEHYAGNFP (304 aa)) are catalytic. C341, H392, and H525 together coordinate Zn(2+).

It belongs to the class-II aminoacyl-tRNA synthetase family. Homodimer. It depends on Zn(2+) as a cofactor.

Its subcellular location is the cytoplasm. It catalyses the reaction tRNA(Thr) + L-threonine + ATP = L-threonyl-tRNA(Thr) + AMP + diphosphate + H(+). In terms of biological role, catalyzes the attachment of threonine to tRNA(Thr) in a two-step reaction: L-threonine is first activated by ATP to form Thr-AMP and then transferred to the acceptor end of tRNA(Thr). Also edits incorrectly charged L-seryl-tRNA(Thr). In Rhodopseudomonas palustris (strain ATCC BAA-98 / CGA009), this protein is Threonine--tRNA ligase.